The following is a 349-amino-acid chain: Ferredoxin--NADP reductase 1 (349 aa).

FAD-binding residues include Glu36, Lys44, Tyr48, Val88, Leu123, Asp290, and Ser331.

Belongs to the ferredoxin--NADP reductase type 2 family. In terms of assembly, homodimer. Requires FAD as cofactor.

It catalyses the reaction 2 reduced [2Fe-2S]-[ferredoxin] + NADP(+) + H(+) = 2 oxidized [2Fe-2S]-[ferredoxin] + NADPH. The polypeptide is Ferredoxin--NADP reductase 1 (Bacillus cytotoxicus (strain DSM 22905 / CIP 110041 / 391-98 / NVH 391-98)).